Reading from the N-terminus, the 137-residue chain is Ubiquitin-conjugating enzyme variant MMS2 (137 aa).

A UBC core domain is found at 5-137; sequence PRNFRLLEEL…LRQPKEGETF (133 aa). Phosphoserine is present on Ser71.

Belongs to the ubiquitin-conjugating enzyme family. As to quaternary structure, heterodimer with UBC13.

Its function is as follows. Has a role in the DNA error-free postreplication repair (PRR) pathway. Lacks catalytic activity by itself. The UBC13/MMS2 heterodimer catalyzes the synthesis of non-canonical poly-ubiquitin chains that are linked through 'Lys-63'. The protein is Ubiquitin-conjugating enzyme variant MMS2 (MMS2) of Saccharomyces cerevisiae (strain ATCC 204508 / S288c) (Baker's yeast).